We begin with the raw amino-acid sequence, 165 residues long: Transcription elongation factor A protein-like 1 (165 aa).

Residues 1 to 101 (MENTRSENEE…EQPPCGVGKH (101 aa)) are disordered. Positions 33–60 (CSEEDQSSEDLSSEEQSSEEEFFPEELL) are enriched in acidic residues.

Belongs to the TFS-II family. TFA subfamily.

The protein localises to the nucleus. Functionally, may be involved in transcriptional regulation. Modulates various viral and cellular promoters in a promoter context-dependent manner. Does not bind DNA directly. In Mus musculus (Mouse), this protein is Transcription elongation factor A protein-like 1.